The sequence spans 174 residues: MGSILQFVLIIITINITYVTLTTIRFILMIKGMRVYASLLSVLEVFIYIMGLSIILDNLDSYWNIAAYCCGYGVGVYLGSRIEERLALGYIMAQVIVECEYQGLAGELRDAGFGVTSWLGEGKTGPRMVMMVLAKRNRQKELLNRIDSLCSNAFVIFEEPKNFRGGFWAKKVLH.

The next 3 helical transmembrane spans lie at 4-24 (ILQF…LTTI), 35-55 (VYAS…LSII), and 59-79 (LDSY…VYLG).

Belongs to the UPF0316 family.

The protein localises to the cell membrane. This Desulfitobacterium hafniense (strain DSM 10664 / DCB-2) protein is UPF0316 protein Dhaf_3052.